The chain runs to 448 residues: Nicotinate phosphoribosyltransferase pncB1 (448 aa).

The segment at Met-1–Gly-21 is disordered. Residue His-212 is modified to Phosphohistidine. Residues Arg-353–Ala-372 form a disordered region.

Belongs to the NAPRTase family. In terms of processing, transiently phosphorylated on a His residue during the reaction cycle. Phosphorylation strongly increases the affinity for substrates and increases the rate of nicotinate D-ribonucleotide production. Dephosphorylation regenerates the low-affinity form of the enzyme, leading to product release.

The enzyme catalyses nicotinate + 5-phospho-alpha-D-ribose 1-diphosphate + ATP + H2O = nicotinate beta-D-ribonucleotide + ADP + phosphate + diphosphate. The protein operates within cofactor biosynthesis; NAD(+) biosynthesis; nicotinate D-ribonucleotide from nicotinate: step 1/1. In terms of biological role, involved in the Preiss-Handler pathway, which is a recycling route that permits the salvage of free nicotinamide (NM) and nicotinic acid (Na) involved in the NAD biosynthesis. Catalyzes the synthesis of beta-nicotinate D-ribonucleotide from nicotinate and 5-phospho-D-ribose 1-phosphate at the expense of ATP. It is not able to use nicotinamide. PncB1 contributes to basal NAD level. The chain is Nicotinate phosphoribosyltransferase pncB1 (pncB1) from Mycobacterium tuberculosis (strain ATCC 25618 / H37Rv).